A 417-amino-acid chain; its full sequence is Serine hydroxymethyltransferase (417 aa).

(6S)-5,6,7,8-tetrahydrofolate contacts are provided by residues Leu121 and 125–127; that span reads GHL. At Lys229 the chain carries N6-(pyridoxal phosphate)lysine. 355–357 serves as a coordination point for (6S)-5,6,7,8-tetrahydrofolate; it reads SPF.

This sequence belongs to the SHMT family. As to quaternary structure, homodimer. Pyridoxal 5'-phosphate is required as a cofactor.

It localises to the cytoplasm. It catalyses the reaction (6R)-5,10-methylene-5,6,7,8-tetrahydrofolate + glycine + H2O = (6S)-5,6,7,8-tetrahydrofolate + L-serine. It functions in the pathway one-carbon metabolism; tetrahydrofolate interconversion. It participates in amino-acid biosynthesis; glycine biosynthesis; glycine from L-serine: step 1/1. In terms of biological role, catalyzes the reversible interconversion of serine and glycine with tetrahydrofolate (THF) serving as the one-carbon carrier. This reaction serves as the major source of one-carbon groups required for the biosynthesis of purines, thymidylate, methionine, and other important biomolecules. Also exhibits THF-independent aldolase activity toward beta-hydroxyamino acids, producing glycine and aldehydes, via a retro-aldol mechanism. This Xanthomonas oryzae pv. oryzae (strain MAFF 311018) protein is Serine hydroxymethyltransferase.